A 311-amino-acid polypeptide reads, in one-letter code: MPLRIIFMGTPEFSVPTLLALAGAGHEIAAVYTQPPRPGGRRGLDLQKSPVHQAAERLDIPVLTPVNFKEAADRRTFRNFGADAAVVVAYGLLLPEEILSGTRCGCYNGHASLLPRWRGAAPIQRAIMAGDRETGMMVMKMDKGLDTGPVALARSVPIHATMTAGELHDRLSEVGAKLMTEAMARLEAGELPLTPQPQEGVVYAAKISKEETRIDFSRPAAEVHNHIRGLSPFPGAWFELDIAGRRERIKVLGSEISQGEGAPGQVLDGSLAIACGEGAVRLTRLQRAGGKALPAADFLRGTPIVASAGIG.

(6S)-5,6,7,8-tetrahydrofolate is bound at residue 112 to 115; sequence SLLP.

The protein belongs to the Fmt family.

The catalysed reaction is L-methionyl-tRNA(fMet) + (6R)-10-formyltetrahydrofolate = N-formyl-L-methionyl-tRNA(fMet) + (6S)-5,6,7,8-tetrahydrofolate + H(+). Attaches a formyl group to the free amino group of methionyl-tRNA(fMet). The formyl group appears to play a dual role in the initiator identity of N-formylmethionyl-tRNA by promoting its recognition by IF2 and preventing the misappropriation of this tRNA by the elongation apparatus. The chain is Methionyl-tRNA formyltransferase from Sinorhizobium medicae (strain WSM419) (Ensifer medicae).